Here is a 180-residue protein sequence, read N- to C-terminus: Stathmin-3 (180 aa).

2 S-palmitoyl cysteine lipidation sites follow: Cys-22 and Cys-24. Positions 38 to 180 (GDMEVKQLDK…NKEQREEMSG (143 aa)) constitute an SLD domain. Residues Ser-50, Ser-60, Ser-65, Ser-68, Ser-72, Ser-73, and Ser-81 each carry the phosphoserine modification. Residues 58-81 (LKSPSDLSPESPVLSSPPKRKDAS) are disordered. A compositionally biased stretch (low complexity) spans 60–74 (SPSDLSPESPVLSSP). The stretch at 75-179 (PKRKDASLEE…RNKEQREEMS (105 aa)) forms a coiled coil.

It belongs to the stathmin family. As to quaternary structure, interacts with STAT3. Interacts with CLU (secreted form); this interaction may act as an important modulator during neuronal differentiation. N-terminal palmitoylation promotes specific anchoring to the cytosolic leaflet of Golgi membranes and subsequent vesicular trafficking along dendrites and axons. Neuronal Stathmins are substrates for palmitoyltransferases ZDHHC3, ZDHHC7 and ZDHHC15. Neuron specific.

It localises to the golgi apparatus. Its subcellular location is the cell projection. It is found in the growth cone. The protein resides in the axon. The protein localises to the cytoplasm. It localises to the cytosol. Exhibits microtubule-destabilizing activity, which is antagonized by STAT3. The protein is Stathmin-3 (Stmn3) of Rattus norvegicus (Rat).